Reading from the N-terminus, the 481-residue chain is UDP-N-acetylmuramate--L-alanine ligase (481 aa).

An ATP-binding site is contributed by 135-141; it reads GTHGKTT.

Belongs to the MurCDEF family.

Its subcellular location is the cytoplasm. The catalysed reaction is UDP-N-acetyl-alpha-D-muramate + L-alanine + ATP = UDP-N-acetyl-alpha-D-muramoyl-L-alanine + ADP + phosphate + H(+). It functions in the pathway cell wall biogenesis; peptidoglycan biosynthesis. In terms of biological role, cell wall formation. This chain is UDP-N-acetylmuramate--L-alanine ligase, found in Nostoc punctiforme (strain ATCC 29133 / PCC 73102).